Here is a 564-residue protein sequence, read N- to C-terminus: MFS-type transporter kojT (564 aa).

Asparagine 113 carries an N-linked (GlcNAc...) asparagine glycan. Transmembrane regions (helical) follow at residues 120–140, 159–179, 187–207, 217–237, 249–269, 278–298, 353–373, 389–409, 437–457, 462–482, 500–520, and 530–550; these read WATL…SSID, SLAT…AAPF, PVYI…GLAP, FLAG…MADI, VCCT…AFIG, WTEW…FLFV, IMVA…FGFL, GSVG…FAMV, LWFA…MGWT, ISYW…QGIF, ALVS…IVSI, and WSLT…YIFY.

It belongs to the major facilitator superfamily.

It is found in the cell membrane. In terms of biological role, MFS-type transporter; part of the gene cluster that mediates the biosynthesis of 5-hydroxy-2-hydroxymethyl-1,4-pyrone, also know as kojic acid, a by-product in the fermentation process of malting rice that acts as a chelation agent. Involved in the seretion of kojic acid. The chain is MFS-type transporter kojT from Aspergillus flavus (strain ATCC 200026 / FGSC A1120 / IAM 13836 / NRRL 3357 / JCM 12722 / SRRC 167).